Here is a 403-residue protein sequence, read N- to C-terminus: Renin (403 aa).

An N-terminal signal peptide occupies residues 1–22; the sequence is MARCRMPRWGLLLVLWGSCTFG. Positions 23–65 are cleaved as a propeptide — activation peptide; it reads LPADTGAFRRIFLKKMPSIRESLKERGVDVAGLGAEWNQFTKR. N70 is a glycosylation site (N-linked (GlcNAc...) asparagine). Residues 85–400 enclose the Peptidase A1 domain; that stretch reads YYGEIGIGTP…DRHNNRIGFA (316 aa). D103 is an active-site residue. A disulfide bridge links C116 with C123. N-linked (GlcNAc...) asparagine glycosylation occurs at N140. A disulfide bond links C279 and C283. D288 is a catalytic residue. A disulfide bond links C322 and C359.

This sequence belongs to the peptidase A1 family. In terms of assembly, interacts with ATP6AP2.

It localises to the secreted. It is found in the membrane. The enzyme catalyses Cleavage of Leu-|-Xaa bond in angiotensinogen to generate angiotensin I.. With respect to regulation, interaction with ATP6AP2 results in a 5-fold increased efficiency in angiotensinogen processing. Renin is a highly specific endopeptidase, whose only known function is to generate angiotensin I from angiotensinogen in the plasma, initiating a cascade of reactions that produce an elevation of blood pressure and increased sodium retention by the kidney. This chain is Renin (REN), found in Canis lupus familiaris (Dog).